A 442-amino-acid chain; its full sequence is Glycoprotein endo-alpha-1,2-mannosidase-like protein (442 aa).

Topologically, residues 1-8 are cytoplasmic; that stretch reads MNRLRRKA. The helical; Signal-anchor for type II membrane protein transmembrane segment at 9 to 29 threads the bilayer; that stretch reads CVALLLFTLFIFGTMMGLRTL. The Lumenal portion of the chain corresponds to 30-442; the sequence is KPTDGFSDLA…FSKEKEQWLM (413 aa).

This sequence belongs to the glycosyl hydrolase 99 family.

The protein localises to the golgi apparatus membrane. This chain is Glycoprotein endo-alpha-1,2-mannosidase-like protein (maneal), found in Danio rerio (Zebrafish).